A 155-amino-acid polypeptide reads, in one-letter code: Small ribosomal subunit protein uS7 (155 aa).

This sequence belongs to the universal ribosomal protein uS7 family. As to quaternary structure, part of the 30S ribosomal subunit. Contacts proteins S9 and S11.

One of the primary rRNA binding proteins, it binds directly to 16S rRNA where it nucleates assembly of the head domain of the 30S subunit. Is located at the subunit interface close to the decoding center, probably blocks exit of the E-site tRNA. The polypeptide is Small ribosomal subunit protein uS7 (Pseudothermotoga lettingae (strain ATCC BAA-301 / DSM 14385 / NBRC 107922 / TMO) (Thermotoga lettingae)).